A 185-amino-acid chain; its full sequence is Elongation factor P (185 aa).

Belongs to the elongation factor P family.

It is found in the cytoplasm. It functions in the pathway protein biosynthesis; polypeptide chain elongation. Involved in peptide bond synthesis. Stimulates efficient translation and peptide-bond synthesis on native or reconstituted 70S ribosomes in vitro. Probably functions indirectly by altering the affinity of the ribosome for aminoacyl-tRNA, thus increasing their reactivity as acceptors for peptidyl transferase. The chain is Elongation factor P from Gloeothece citriformis (strain PCC 7424) (Cyanothece sp. (strain PCC 7424)).